The following is a 314-amino-acid chain: MGIGRSEGGRRGAALGVLLALGAALLAVGSASEYDYVSFQSDIGPYQSGRFYTKPPQCVDIPADLRLCHNVGYKKMVLPNLLEHETMAEVKQQASSWVPLLNKNCHAGTQVFLCSLFAPVCLDRPIYPCRWLCEAVRDSCEPVMQFFGFYWPEMLKCDKFPEGDVCIAMTPPNATEASKPQGTTVCPPCDNELKSEAIIEHLCASEFALRMKIKEVKKENGDKKIVPKKKKPLKLGPIKKKDLKKLVLYLKNGADCPCHQLDNLSHHFLIMGRKVKSQYLLTAIHKWDKKNKEFKNFMKKMKNHECPTFQSVFK.

A signal peptide spans 1–31 (MGIGRSEGGRRGAALGVLLALGAALLAVGSA). One can recognise an FZ domain in the interval 53-169 (TKPPQCVDIP…FPEGDVCIAM (117 aa)). 5 disulfides stabilise this stretch: cysteine 58–cysteine 121, cysteine 68–cysteine 114, cysteine 105–cysteine 140, cysteine 129–cysteine 166, and cysteine 133–cysteine 157. A glycan (N-linked (GlcNAc...) asparagine) is linked at asparagine 173. Intrachain disulfides connect cysteine 186-cysteine 256, cysteine 189-cysteine 258, and cysteine 203-cysteine 306. The NTR domain occupies 186 to 306 (CPPCDNELKS…FMKKMKNHEC (121 aa)).

The protein belongs to the secreted frizzled-related protein (sFRP) family. As to quaternary structure, interacts with WNT1, WNT2 and FRZD6. Interacts with WNT4, WNT8 and MYOC. As to expression, widely expressed. Absent from lung, liver and peripheral blood leukocytes. Highest levels in heart and fetal kidney. Also expressed in testis, ovary, fetal brain and lung, leiomyomal cells, myometrial cells and vascular smooth muscle cells. Expressed in foreskin fibroblasts and in keratinocytes.

The protein localises to the secreted. Its function is as follows. Soluble frizzled-related proteins (sFRPS) function as modulators of Wnt signaling through direct interaction with Wnts. They have a role in regulating cell growth and differentiation in specific cell types. SFRP1 decreases intracellular beta-catenin levels. Has antiproliferative effects on vascular cells, in vitro and in vivo, and can induce, in vivo, an angiogenic response. In vascular cell cycle, delays the G1 phase and entry into the S phase. In kidney development, inhibits tubule formation and bud growth in metanephroi. Inhibits WNT1/WNT4-mediated TCF-dependent transcription. The polypeptide is Secreted frizzled-related protein 1 (SFRP1) (Homo sapiens (Human)).